The primary structure comprises 977 residues: Leucine--tRNA ligase (977 aa).

The 'HIGH' region motif lies at 11 to 21 (PYVNGYLHLGH). The segment at 220 to 318 (VFYVYELYSL…EYYNTKVETQ (99 aa)) is insert. The 'KMSKS' region signature appears at 699 to 703 (KMSKS). ATP is bound at residue Lys702.

This sequence belongs to the class-I aminoacyl-tRNA synthetase family.

It localises to the cytoplasm. The catalysed reaction is tRNA(Leu) + L-leucine + ATP = L-leucyl-tRNA(Leu) + AMP + diphosphate. This is Leucine--tRNA ligase (leuS) from Nanoarchaeum equitans (strain Kin4-M).